Consider the following 646-residue polypeptide: Amyloid beta A4 precursor protein-binding family B member 1-interacting protein (646 aa).

Positions 82 to 141 are disordered; it reads FATERDTSKGSVPVAPAPSKPQSNFSLPASFDSSKPATSSNSIAAPPPPPAFKPSKEEEE. A compositionally biased stretch (polar residues) spans 101–116; that stretch reads KPQSNFSLPASFDSSK. The region spanning 162–248 is the Ras-associating domain; the sequence is KKLVVKVEIT…NKVLFQEKKH (87 aa). The 110-residue stretch at 292–401 folds into the PH domain; that stretch reads VPDLEGVLYL…WVTGIRVAKY (110 aa). The disordered stretch occupies residues 420 to 646; sequence ASWANRTIQA…NAMQKKRTQP (227 aa). Residues 429-445 are compositionally biased toward low complexity; that stretch reads ASSTASTPSPTPKAKAA. Composition is skewed to pro residues over residues 465 to 500, 509 to 536, 560 to 577, and 584 to 598; these read LPPP…PPVP, FPPP…PPPE, LPPP…PPPA, and APPP…PAPA.

This sequence belongs to the MRL family.

The protein resides in the cell membrane. The protein localises to the cytoplasm. It is found in the cytoskeleton. Functionally, appears to function in the signal transduction from Ras activation to actin cytoskeletal remodeling. This Danio rerio (Zebrafish) protein is Amyloid beta A4 precursor protein-binding family B member 1-interacting protein (apbb1ip).